The following is a 273-amino-acid chain: Embryonic polyadenylate-binding protein 2 (273 aa).

Residues 22 to 57 (SSDPEAQGWGAWGRTEKTSLVPRAGSRAGSDKEAEE) form a disordered region. The RRM domain maps to 143–220 (RSVFVGNVDY…RVIKVLPKRT (78 aa)).

The protein localises to the cytoplasm. In terms of biological role, binds the poly(A) tail of mRNA. The protein is Embryonic polyadenylate-binding protein 2 (Pabpn1l) of Mus musculus (Mouse).